The primary structure comprises 778 residues: Phosphoribosylformylglycinamidine synthase subunit PurL (778 aa).

His-44 is an active-site residue. ATP-binding residues include Tyr-47 and Lys-86. Glu-88 contributes to the Mg(2+) binding site. Substrate contacts are provided by residues 89–92 and Arg-111; that span reads SHNH. Catalysis depends on His-90, which acts as the Proton acceptor. 2 residues coordinate Mg(2+): Asp-112 and Asp-265. Residue 309–311 participates in substrate binding; sequence ESQ. Residues 455-474 form a disordered region; sequence TRQPPGEGLPGRSGQAGPPK. 2 residues coordinate ATP: Asn-518 and Gly-555. Asn-556 provides a ligand contact to Mg(2+). Substrate is bound at residue Ser-558.

It belongs to the FGAMS family. As to quaternary structure, monomer. Part of the FGAM synthase complex composed of 1 PurL, 1 PurQ and 2 PurS subunits.

The protein resides in the cytoplasm. The enzyme catalyses N(2)-formyl-N(1)-(5-phospho-beta-D-ribosyl)glycinamide + L-glutamine + ATP + H2O = 2-formamido-N(1)-(5-O-phospho-beta-D-ribosyl)acetamidine + L-glutamate + ADP + phosphate + H(+). It participates in purine metabolism; IMP biosynthesis via de novo pathway; 5-amino-1-(5-phospho-D-ribosyl)imidazole from N(2)-formyl-N(1)-(5-phospho-D-ribosyl)glycinamide: step 1/2. In terms of biological role, part of the phosphoribosylformylglycinamidine synthase complex involved in the purines biosynthetic pathway. Catalyzes the ATP-dependent conversion of formylglycinamide ribonucleotide (FGAR) and glutamine to yield formylglycinamidine ribonucleotide (FGAM) and glutamate. The FGAM synthase complex is composed of three subunits. PurQ produces an ammonia molecule by converting glutamine to glutamate. PurL transfers the ammonia molecule to FGAR to form FGAM in an ATP-dependent manner. PurS interacts with PurQ and PurL and is thought to assist in the transfer of the ammonia molecule from PurQ to PurL. The chain is Phosphoribosylformylglycinamidine synthase subunit PurL from Symbiobacterium thermophilum (strain DSM 24528 / JCM 14929 / IAM 14863 / T).